The chain runs to 628 residues: 1-deoxy-D-xylulose-5-phosphate synthase (628 aa).

Residues histidine 72 and 113-115 (GHS) contribute to the thiamine diphosphate site. Aspartate 144 is a Mg(2+) binding site. Thiamine diphosphate-binding positions include 145-146 (GA), asparagine 173, tyrosine 284, and glutamate 366. Asparagine 173 contacts Mg(2+).

This sequence belongs to the transketolase family. DXPS subfamily. In terms of assembly, homodimer. The cofactor is Mg(2+). Requires thiamine diphosphate as cofactor.

The enzyme catalyses D-glyceraldehyde 3-phosphate + pyruvate + H(+) = 1-deoxy-D-xylulose 5-phosphate + CO2. Its pathway is metabolic intermediate biosynthesis; 1-deoxy-D-xylulose 5-phosphate biosynthesis; 1-deoxy-D-xylulose 5-phosphate from D-glyceraldehyde 3-phosphate and pyruvate: step 1/1. In terms of biological role, catalyzes the acyloin condensation reaction between C atoms 2 and 3 of pyruvate and glyceraldehyde 3-phosphate to yield 1-deoxy-D-xylulose-5-phosphate (DXP). The sequence is that of 1-deoxy-D-xylulose-5-phosphate synthase from Shouchella clausii (strain KSM-K16) (Alkalihalobacillus clausii).